Consider the following 153-residue polypeptide: Riboflavin synthase (153 aa).

It belongs to the DMRL synthase family.

The catalysed reaction is 2 6,7-dimethyl-8-(1-D-ribityl)lumazine + H(+) = 5-amino-6-(D-ribitylamino)uracil + riboflavin. Its pathway is cofactor biosynthesis; riboflavin biosynthesis; riboflavin from 2-hydroxy-3-oxobutyl phosphate and 5-amino-6-(D-ribitylamino)uracil: step 2/2. The sequence is that of Riboflavin synthase (ribC) from Archaeoglobus fulgidus (strain ATCC 49558 / DSM 4304 / JCM 9628 / NBRC 100126 / VC-16).